The chain runs to 481 residues: Surface lipoprotein assembly modifier 2 (481 aa).

The N-terminal stretch at M1–A24 is a signal peptide. Residues A24–N192 form an N-terminal domain region. Residues Q193–F481 form a C-terminal probable beta barrel region. The next 14 beta stranded transmembrane spans lie at W194–N204, A223–P243, F248–N257, T271–Q281, V285–K295, L315–L325, W329–E339, Y353–P363, F368–R377, K390–D399, I404–N414, Y432–R441, L448–K458, and N471–F481.

The protein belongs to the Slam family.

The protein localises to the cell outer membrane. Its function is as follows. Required for correct export to the cell surface of some cell outer membrane lipoproteins. This is Surface lipoprotein assembly modifier 2 from Haemophilus influenzae (strain ATCC 51907 / DSM 11121 / KW20 / Rd).